The following is a 585-amino-acid chain: Putative indole-3-acetic acid-amido synthetase GH3.9 (585 aa).

This sequence belongs to the IAA-amido conjugating enzyme family.

In terms of biological role, catalyzes the synthesis of indole-3-acetic acid (IAA)-amino acid conjugates, providing a mechanism for the plant to cope with the presence of excess auxin. The chain is Putative indole-3-acetic acid-amido synthetase GH3.9 (GH3.9) from Arabidopsis thaliana (Mouse-ear cress).